The sequence spans 316 residues: Ribosomal protein L11 methyltransferase (316 aa).

The S-adenosyl-L-methionine site is built by Thr159, Gly179, Asp201, and Asn243.

This sequence belongs to the methyltransferase superfamily. PrmA family.

The protein resides in the cytoplasm. The catalysed reaction is L-lysyl-[protein] + 3 S-adenosyl-L-methionine = N(6),N(6),N(6)-trimethyl-L-lysyl-[protein] + 3 S-adenosyl-L-homocysteine + 3 H(+). In terms of biological role, methylates ribosomal protein L11. This chain is Ribosomal protein L11 methyltransferase, found in Gloeobacter violaceus (strain ATCC 29082 / PCC 7421).